The following is a 222-amino-acid chain: Uridine kinase (222 aa).

13–20 (GGSGAGKT) lines the ATP pocket.

It belongs to the uridine kinase family.

The protein localises to the cytoplasm. The enzyme catalyses uridine + ATP = UMP + ADP + H(+). It catalyses the reaction cytidine + ATP = CMP + ADP + H(+). It participates in pyrimidine metabolism; CTP biosynthesis via salvage pathway; CTP from cytidine: step 1/3. Its pathway is pyrimidine metabolism; UMP biosynthesis via salvage pathway; UMP from uridine: step 1/1. The polypeptide is Uridine kinase (Chlamydia pneumoniae (Chlamydophila pneumoniae)).